The sequence spans 126 residues: MRRAAPAERREYGNAGEEAAVRFLEAQGWRVRDRNWTCRFGELDVVAERDDLVCFVEVRMRSTATWGDPSHSVSFAKQRRVVKAALRYLFAHDLRGRMFRFDVISVVGRGERATVDHIPGAFDAGM.

Belongs to the UPF0102 family.

The sequence is that of UPF0102 protein MXAN_3551 from Myxococcus xanthus (strain DK1622).